We begin with the raw amino-acid sequence, 153 residues long: Ribosome maturation factor RimP (153 aa).

It belongs to the RimP family.

The protein resides in the cytoplasm. Required for maturation of 30S ribosomal subunits. This Clostridium botulinum (strain ATCC 19397 / Type A) protein is Ribosome maturation factor RimP.